A 451-amino-acid chain; its full sequence is Protein-tyrosine kinase 6 (451 aa).

In terms of domain architecture, SH3 spans 8–72 (HLGPKYVGLW…PHNYLAEKET (65 aa)). Residues Tyr13, Tyr61, Tyr66, and Tyr114 each carry the phosphotyrosine modification. The 93-residue stretch at 78–170 (WFFGCISRSE…SHGLQLSMPC (93 aa)) folds into the SH2 domain. Positions 171–190 (WKHKTEPLPHWDDWERPREE) are linker. The Protein kinase domain maps to 191-445 (FTLCKKLGAG…DLCEKLTGIT (255 aa)). Residues 197 to 205 (LGAGYFGEV) and Lys219 each bind ATP. The Proton acceptor role is filled by Asp312. Tyr342 bears the Phosphotyrosine; by autocatalysis mark. Phosphotyrosine is present on residues Tyr351 and Tyr447.

Belongs to the protein kinase superfamily. Tyr protein kinase family. BRK/PTK6/SIK subfamily. As to quaternary structure, interacts with KHDRBS1. Interacts with phosphorylated IRS4. Interacts with GAP-A.p65. Interacts with ADAM15. Interacts (via SH3 and SH2 domains) with phosphorylated IRS4. Interacts (via SH3 domain) with SFPQ. Interacts with EGFR and ERBB2. Interacts with STAP2. Interacts with PNX. Interacts with SFPQ. Interacts with PTK/ATK. Interacts with CTNNB1. In terms of processing, autophosphorylated. Autophosphorylation of Tyr-342 leads to an increase of kinase activity. Tyr-447 binds to the SH2 domain when phosphorylated and negatively regulates kinase activity. Expressed only in epithelial tissues, including the skin and lining of the alimentary canal. Restricted to the cell layers immediately above the proliferative cell zone in these epithelia.

Its subcellular location is the cytoplasm. It localises to the nucleus. The protein localises to the membrane. It is found in the cell projection. The protein resides in the ruffle. It catalyses the reaction L-tyrosyl-[protein] + ATP = O-phospho-L-tyrosyl-[protein] + ADP + H(+). With respect to regulation, activated by EGF, NRG1 and IGF1. Inhibited by SOCS3 to phosphorylate STAT3. Stabilized in the inactive form by an association between the SH3 domain and the SH2-TK linker region. Interaction between Trp-184 within SH2-TK linker region and the catalytic domain appears essential for positive regulation of kinase activity. Its function is as follows. Non-receptor tyrosine-protein kinase implicated in the regulation of a variety of signaling pathways that control the differentiation and maintenance of normal epithelia, as well as tumor growth. Function seems to be context dependent and differ depending on cell type, as well as its intracellular localization. A number of potential nuclear and cytoplasmic substrates have been identified. These include the RNA-binding proteins: KHDRBS1/SAM68, KHDRBS2/SLM1, KHDRBS3/SLM2 and SFPQ/PSF; transcription factors: STAT3 and STAT5A/B and a variety of signaling molecules: ARHGAP35/p190RhoGAP, PXN/paxillin, BTK/ATK, STAP2/BKS. Phosphorylates the GTPase-activating protein ARAP1 following EGF stimulation which enhances EGFR signaling by delaying EGFR down-regulation. Also associates with a variety of proteins that are likely upstream of PTK6 in various signaling pathways, or for which PTK6 may play an adapter-like role. These proteins include ADAM15, EGFR, ERBB2, ERBB3 and IRS4. In normal or non-tumorigenic tissues, PTK6 promotes cellular differentiation and apoptosis. In tumors PTK6 contributes to cancer progression by sensitizing cells to mitogenic signals and enhancing proliferation, anchorage-independent survival and migration/invasion. Association with EGFR, ERBB2, ERBB3 may contribute to mammary tumor development and growth through enhancement of EGF-induced signaling via BTK/AKT and PI3 kinase. Contributes to migration and proliferation by contributing to EGF-mediated phosphorylation of ARHGAP35/p190RhoGAP, which promotes association with RASA1/p120RasGAP, inactivating RhoA while activating RAS. EGF stimulation resulted in phosphorylation of PNX/Paxillin by PTK6 and activation of RAC1 via CRK/CrKII, thereby promoting migration and invasion. PTK6 activates STAT3 and STAT5B to promote proliferation. Nuclear PTK6 may be important for regulating growth in normal epithelia, while cytoplasmic PTK6 might activate oncogenic signaling pathways. The protein is Protein-tyrosine kinase 6 (Ptk6) of Mus musculus (Mouse).